The sequence spans 520 residues: BTB/POZ domain-containing protein At3g50780 (520 aa).

The tract at residues 43–68 is disordered; it reads SHNSLTKHKQSSPALQPPKPEKKPSS. The BTB domain occupies 127-196; sequence AKVILVGKQG…MYCKDMKQRL (70 aa).

It participates in protein modification; protein ubiquitination. In terms of biological role, may act as a substrate-specific adapter of an E3 ubiquitin-protein ligase complex (CUL3-RBX1-BTB) which mediates the ubiquitination and subsequent proteasomal degradation of target proteins. The chain is BTB/POZ domain-containing protein At3g50780 from Arabidopsis thaliana (Mouse-ear cress).